The following is a 60-amino-acid chain: Large ribosomal subunit protein uL30 (60 aa).

The protein belongs to the universal ribosomal protein uL30 family. In terms of assembly, part of the 50S ribosomal subunit.

This Cupriavidus metallidurans (strain ATCC 43123 / DSM 2839 / NBRC 102507 / CH34) (Ralstonia metallidurans) protein is Large ribosomal subunit protein uL30.